The following is a 649-amino-acid chain: MENDPSRRRESISLTPVAKGLENMGADFLESLEEGQLPRSDLSPAEIRSSWSEAAPKPFSRWRNLQPALRARSFCREHMQLFRWIGTGLLCTGLSAFLLVACLLDFQRALALFVLTCVVLTFLGHRLLKRLLGPKLRRFLKPQGHPRLLLWFKRGLALAAFLGLVLWLSLDTSQRPEQLVSFAGICVFVALLFACSKHHCAVSWRAVSWGLGLQFVLGLLVIRTEPGFIAFEWLGEQIRIFLSYTKAGSSFVFGEALVKDVFAFQVLPIIVFFSCVISVLYHVGLMQWVILKIAWLMQVTMGTTATETLSVAGNIFVSQTEAPLLIRPYLADMTLSEVHVVMTGGYATIAGSLLGAYISFGIDATSLIAASVMAAPCALALSKLVYPEVEESKFRREEGVKLTYGDAQNLIEAASTGAAISVKVVANIAANLIAFLAVLDFINAALSWLGDMVDIQGLSFQLICSYILRPVAFLMGVAWEDCPVVAELLGIKLFLNEFVAYQDLSKYKQRRLAGAEEWVGDRKQWISVRAEVLTTFALCGFANFSSIGIMLGGLTSMVPQRKSDFSQIVLRALFTGACVSLVNACMAGILYMPRGAEVDCMSLLNTTLSSSSFEIYQCCREAFQSVNPEFSPEALDNCCRFYNHTICAQ.

Topologically, residues 1-80 are cytoplasmic; sequence MENDPSRRRE…ARSFCREHMQ (80 aa). Residues 81–104 traverse the membrane as a helical segment; that stretch reads LFRWIGTGLLCTGLSAFLLVACLL. The Extracellular portion of the chain corresponds to 105 to 109; the sequence is DFQRA. A helical membrane pass occupies residues 110–128; that stretch reads LALFVLTCVVLTFLGHRLL. The Cytoplasmic portion of the chain corresponds to 129–147; that stretch reads KRLLGPKLRRFLKPQGHPR. A helical membrane pass occupies residues 148–167; that stretch reads LLLWFKRGLALAAFLGLVLW. Over 168-178 the chain is Extracellular; sequence LSLDTSQRPEQ. The helical transmembrane segment at 179–195 threads the bilayer; it reads LVSFAGICVFVALLFAC. The Cytoplasmic portion of the chain corresponds to 196 to 201; the sequence is SKHHCA. A helical transmembrane segment spans residues 202-222; the sequence is VSWRAVSWGLGLQFVLGLLVI. The Extracellular segment spans residues 223–261; it reads RTEPGFIAFEWLGEQIRIFLSYTKAGSSFVFGEALVKDV. Residues 262 to 283 traverse the membrane as a helical segment; the sequence is FAFQVLPIIVFFSCVISVLYHV. The Cytoplasmic segment spans residues 284 to 294; that stretch reads GLMQWVILKIA. Residues 295 to 318 traverse the membrane as a helical segment; sequence WLMQVTMGTTATETLSVAGNIFVS. The Extracellular portion of the chain corresponds to 319–337; that stretch reads QTEAPLLIRPYLADMTLSE. A helical transmembrane segment spans residues 338–360; the sequence is VHVVMTGGYATIAGSLLGAYISF. The Cytoplasmic segment spans residues 361–366; that stretch reads GIDATS. A helical transmembrane segment spans residues 367-386; that stretch reads LIAASVMAAPCALALSKLVY. Residues 387 to 423 lie on the Extracellular side of the membrane; the sequence is PEVEESKFRREEGVKLTYGDAQNLIEAASTGAAISVK. Residues 424–446 form a helical membrane-spanning segment; that stretch reads VVANIAANLIAFLAVLDFINAAL. Residues 447–457 lie on the Cytoplasmic side of the membrane; that stretch reads SWLGDMVDIQG. A helical transmembrane segment spans residues 458–479; it reads LSFQLICSYILRPVAFLMGVAW. Residues 480–534 are Extracellular-facing; it reads EDCPVVAELLGIKLFLNEFVAYQDLSKYKQRRLAGAEEWVGDRKQWISVRAEVLT. The chain crosses the membrane as a helical span at residues 535-558; it reads TFALCGFANFSSIGIMLGGLTSMV. The Cytoplasmic portion of the chain corresponds to 559–569; that stretch reads PQRKSDFSQIV. Residues 570–592 form a helical membrane-spanning segment; sequence LRALFTGACVSLVNACMAGILYM. Residues 593-649 are Extracellular-facing; that stretch reads PRGAEVDCMSLLNTTLSSSSFEIYQCCREAFQSVNPEFSPEALDNCCRFYNHTICAQ. Residues asparagine 605 and asparagine 643 are each glycosylated (N-linked (GlcNAc...) asparagine).

Belongs to the concentrative nucleoside transporter (CNT) (TC 2.A.41) family. N-glycosylated. N-glycosylation is required for localization to the plasma membrane and the transporter activity. Expressed in kidney.

Its subcellular location is the cell membrane. The protein localises to the apical cell membrane. It carries out the reaction uridine(out) + Na(+)(out) = uridine(in) + Na(+)(in). The enzyme catalyses thymidine(out) + Na(+)(out) = thymidine(in) + Na(+)(in). It catalyses the reaction cytidine(out) + Na(+)(out) = cytidine(in) + Na(+)(in). The catalysed reaction is adenosine(out) + Na(+)(out) = adenosine(in) + Na(+)(in). With respect to regulation, due to its high apparent affinity but slow transport, adenosine could act as a negative regulator of pyrimidine transport under some conditions. Its function is as follows. Sodium and pyrimidine nucleoside symporter of the plasma membrane that imports uridine, thymidine and cytidine into cells by coupling their transport to the transmembrane sodium electrochemical gradient. Also transports adenosine, an atypical substrate transported with high apparent affinity, but low maximum velocity. Therefore, exhibits the transport characteristics of the nucleoside transport system cit or N2 subtype (N2/cit). Involved in renal nucleoside (re)absorption. This Homo sapiens (Human) protein is Sodium/nucleoside cotransporter 1.